The primary structure comprises 36 residues: Pancreatic polypeptide (36 aa).

At Tyr-36 the chain carries Tyrosine amide.

It belongs to the NPY family.

It localises to the secreted. Functionally, hormone secreted by pancreatic cells that acts as a regulator of pancreatic and gastrointestinal functions probably by signaling through the G protein-coupled receptor NPY4R2. In Equus przewalskii (Przewalski's horse), this protein is Pancreatic polypeptide (PPY).